The primary structure comprises 867 residues: uncharacterized protein (867 aa).

An SPX domain is found at 1 to 294 (MKFSHSLQFN…GSSLRESYMK (294 aa)). Disordered regions lie at residues 105-152 (QGNN…GQTS) and 165-228 (ESTA…NNNR). Residues 138 to 152 (ITSSNREIYLNGQTS) are compositionally biased toward polar residues. Residues 198 to 223 (GNDDEVEEEDDDDDDEDEDEDEDEDN) are compositionally biased toward acidic residues. 12 consecutive transmembrane segments (helical) span residues 406–426 (TIAT…FPVI), 434–454 (CLAL…PLFV), 485–505 (VIFS…FTIA), 537–557 (MFVA…VLCF), 576–596 (ILIV…PISS), 616–636 (FAVS…LLSF), 656–676 (FTGV…LWCL), 683–703 (VFGD…GTGL), 712–732 (FLWT…VVSS), 755–775 (VLLI…HIVA), 797–817 (LFVL…TSGF), and 842–862 (AGIP…TPIM).

This sequence belongs to the CitM (TC 2.A.11) transporter family.

The protein localises to the endoplasmic reticulum membrane. This is an uncharacterized protein from Schizosaccharomyces pombe (strain 972 / ATCC 24843) (Fission yeast).